The primary structure comprises 879 residues: DNA mismatch repair protein MutS (879 aa).

629-636 (GPNMAGKS) is a binding site for ATP.

This sequence belongs to the DNA mismatch repair MutS family.

Its function is as follows. This protein is involved in the repair of mismatches in DNA. It is possible that it carries out the mismatch recognition step. This protein has a weak ATPase activity. The protein is DNA mismatch repair protein MutS of Ruegeria sp. (strain TM1040) (Silicibacter sp.).